The following is a 425-amino-acid chain: Exodeoxyribonuclease 7 large subunit (425 aa).

The protein belongs to the XseA family. In terms of assembly, heterooligomer composed of large and small subunits.

The protein resides in the cytoplasm. The catalysed reaction is Exonucleolytic cleavage in either 5'- to 3'- or 3'- to 5'-direction to yield nucleoside 5'-phosphates.. Bidirectionally degrades single-stranded DNA into large acid-insoluble oligonucleotides, which are then degraded further into small acid-soluble oligonucleotides. The sequence is that of Exodeoxyribonuclease 7 large subunit from Nocardia farcinica (strain IFM 10152).